The sequence spans 161 residues: Cell wall protein YLR042C (161 aa).

Residues 1-24 (MKISQFGSLAFAPIVLLQLFIVQA) form the signal peptide. N-linked (GlcNAc...) asparagine glycosylation is found at asparagine 77, asparagine 104, and asparagine 120. The disordered stretch occupies residues 111–139 (FTPLPSSSRNETKSSQTTNTISSSTSTGG). Over residues 123–137 (KSSQTTNTISSSTST) the composition is skewed to low complexity. Glycine 139 carries the GPI-anchor amidated glycine lipid modification. Residues 140–161 (VGSVKPCLYFVLMLETIAYLFS) constitute a propeptide, removed in mature form.

Post-translationally, the GPI-anchor is attached to the protein in the endoplasmic reticulum and serves to target the protein to the cell surface. There, the glucosamine-inositol phospholipid moiety is cleaved off and the GPI-modified mannoprotein is covalently attached via its lipidless GPI glycan remnant to the 1,6-beta-glucan of the outer cell wall layer.

It is found in the secreted. Its subcellular location is the cell wall. It localises to the membrane. The sequence is that of Cell wall protein YLR042C from Saccharomyces cerevisiae (strain ATCC 204508 / S288c) (Baker's yeast).